A 1001-amino-acid polypeptide reads, in one-letter code: Ankyrin repeat domain-containing protein 35 (1001 aa).

ANK repeat units lie at residues 53–82, 86–115, 119–148, 152–181, 185–214, and 218–247; these read NGQSPFHLAASKGLTECLTILLANGADINS, DGSTALHLATISCQPQCVKVLLQHGANEDA, ENRSPLHWAASSGCASSVLLLCDHEAFLDV, DGRTPLMIASLGGHAAICSQLLQRGARVNV, NDKSALILACEKGSAEVAELLLSHGADAGA, and TGHDALHYALHTQDKALWRHLQQALSRRRR. Disordered regions lie at residues 256–296, 352–482, and 559–601; these read PDLA…PCSE, PRAS…VAEP, and PEVP…ALGG. A compositionally biased stretch (acidic residues) spans 281 to 295; it reads PEEEQEEKEDEDPCS. Residues 295 to 344 adopt a coiled-coil conformation; sequence SEEWRWKYEEERRKVVRLEQELVQKTEECKTQAAAYLDLENQIREQAQEL. Residues 402 to 422 show a composition bias toward basic and acidic residues; it reads KKAEDSAPGKIQYEVHGRSQP. Residues 423-434 show a composition bias toward low complexity; the sequence is EEQGPPQSPASE. The span at 440-450 shows a compositional bias: polar residues; that stretch reads TGQQLTTNGAQ. Basic and acidic residues predominate over residues 579–588; sequence KQDEEKEKRV. Coiled-coil stretches lie at residues 610–696, 733–810, and 851–968; these read KGQL…LLAS, ISTL…IGKL, and QELK…HEEI. A disordered region spans residues 879–902; the sequence is RRSGDLAAQAAEQERQASEMRGRS. A compositionally biased stretch (basic and acidic residues) spans 890-902; the sequence is EQERQASEMRGRS.

This chain is Ankyrin repeat domain-containing protein 35 (ANKRD35), found in Homo sapiens (Human).